The following is a 331-amino-acid chain: Glyceraldehyde-3-phosphate dehydrogenase (331 aa).

NAD(+) contacts are provided by residues 11–12, Asp-33, and Arg-78; that span reads RI. Residues 148–150, Thr-179, 208–209, and Arg-231 contribute to the D-glyceraldehyde 3-phosphate site; these read SCT and TG. Catalysis depends on Cys-149, which acts as the Nucleophile. Asn-313 lines the NAD(+) pocket.

Belongs to the glyceraldehyde-3-phosphate dehydrogenase family. As to quaternary structure, homotetramer.

The protein localises to the cytoplasm. It catalyses the reaction D-glyceraldehyde 3-phosphate + phosphate + NAD(+) = (2R)-3-phospho-glyceroyl phosphate + NADH + H(+). The protein operates within carbohydrate degradation; glycolysis; pyruvate from D-glyceraldehyde 3-phosphate: step 1/5. This is Glyceraldehyde-3-phosphate dehydrogenase (GPD) from Eremothecium gossypii (strain ATCC 10895 / CBS 109.51 / FGSC 9923 / NRRL Y-1056) (Yeast).